A 585-amino-acid chain; its full sequence is Arginine--tRNA ligase (585 aa).

Positions 127–137 (PNTNKPLHVGH) match the 'HIGH' region motif.

It belongs to the class-I aminoacyl-tRNA synthetase family. As to quaternary structure, monomer.

It is found in the cytoplasm. The enzyme catalyses tRNA(Arg) + L-arginine + ATP = L-arginyl-tRNA(Arg) + AMP + diphosphate. This is Arginine--tRNA ligase (argS) from Borreliella burgdorferi (strain ATCC 35210 / DSM 4680 / CIP 102532 / B31) (Borrelia burgdorferi).